Consider the following 108-residue polypeptide: UPF0060 membrane protein YnfA (108 aa).

Topologically, residues 1–5 are periplasmic; that stretch reads MIKTT. The chain crosses the membrane as a helical span at residues 6–26; that stretch reads LLFFATALCEIIGCFLPWLWL. Residues 27 to 30 are Cytoplasmic-facing; sequence KRNA. The helical transmembrane segment at 31–51 threads the bilayer; sequence SIWLLLPAGISLALFVWLLTL. The Periplasmic segment spans residues 52 to 60; sequence HPAASGRVY. A helical transmembrane segment spans residues 61-81; that stretch reads AAYGGVYVCTALIWLRVVDGV. Residues 82 to 84 lie on the Cytoplasmic side of the membrane; that stretch reads KLS. Residues 85-105 traverse the membrane as a helical segment; the sequence is LYDWTGALIALCGMLIIVAGW. Topologically, residues 106–108 are periplasmic; the sequence is GRT.

The protein belongs to the UPF0060 family.

Its subcellular location is the cell inner membrane. The chain is UPF0060 membrane protein YnfA from Escherichia coli (strain SMS-3-5 / SECEC).